A 536-amino-acid polypeptide reads, in one-letter code: Vacuolar segregation protein pep7 (536 aa).

The segment at 1-31 (MQNGKRRIGVRISSNLSNHSGTNLSTSAQSD) is disordered. Over residues 12–31 (ISSNLSNHSGTNLSTSAQSD) the composition is skewed to polar residues. The C2H2-type zinc-finger motif lies at 39-62 (TECPICGLELPNLSALNDHLDVTH). Residues 136–201 (PDMVCHDPMC…VCRECYEGRP (66 aa)) form an FYVE-type 1; degenerate zinc finger. Positions 158, 161, 193, 196, 281, 284, 297, 300, 305, 308, 324, and 327 each coordinate Zn(2+). The FYVE-type 2 zinc finger occupies 275-332 (DSVVQICPECNNSFTLTRRRRHCRLCGRVICRFCVLEISLPQHPQPLLICMSCNQNYF).

Its function is as follows. Required for vacuole segregation and vacuole protein sorting. Possibly part of a complex which tethers the vacuole membrane to microtubules, either directly or via kinesin or dynein-like motor proteins. Probably functions in several interorganelle traffic pathways. The protein is Vacuolar segregation protein pep7 (pep7) of Schizosaccharomyces pombe (strain 972 / ATCC 24843) (Fission yeast).